The sequence spans 363 residues: Phosphoribosylformylglycinamidine cyclo-ligase (363 aa).

This sequence belongs to the AIR synthase family.

Its subcellular location is the cytoplasm. It catalyses the reaction 2-formamido-N(1)-(5-O-phospho-beta-D-ribosyl)acetamidine + ATP = 5-amino-1-(5-phospho-beta-D-ribosyl)imidazole + ADP + phosphate + H(+). It functions in the pathway purine metabolism; IMP biosynthesis via de novo pathway; 5-amino-1-(5-phospho-D-ribosyl)imidazole from N(2)-formyl-N(1)-(5-phospho-D-ribosyl)glycinamide: step 2/2. In Parvibaculum lavamentivorans (strain DS-1 / DSM 13023 / NCIMB 13966), this protein is Phosphoribosylformylglycinamidine cyclo-ligase.